The chain runs to 394 residues: Bone morphogenetic protein 15 (394 aa).

Residues 1–18 (MVLLSILRILLLWGLVLF) form the signal peptide. Positions 19 to 269 (MEHRVQMTQV…DPSLLLRRAR (251 aa)) are excised as a propeptide. N-linked (GlcNAc...) asparagine glycans are attached at residues Asn-87 and Asn-238. 3 disulfides stabilise this stretch: Cys-293-Cys-359, Cys-322-Cys-391, and Cys-326-Cys-393. N-linked (GlcNAc...) asparagine glycosylation is present at Asn-375.

Belongs to the TGF-beta family. Homodimer or heterodimer (Potential). But, in contrast to other members of this family, cannot be disulfide-linked.

It is found in the secreted. May be involved in follicular development. Seems to be an oocyte-specific growth/differentiation factor that stimulates folliculogenesis and granulosa cell (GC) growth. In Bos taurus (Bovine), this protein is Bone morphogenetic protein 15 (BMP15).